The sequence spans 190 residues: Shikimate kinase (190 aa).

14–19 (GAGKST) contacts ATP. Ser18 contacts Mg(2+). Residues Asp36, Arg60, and Gly82 each coordinate substrate. ATP is bound at residue Arg120. A substrate-binding site is contributed by Arg139.

This sequence belongs to the shikimate kinase family. As to quaternary structure, monomer. Requires Mg(2+) as cofactor.

Its subcellular location is the cytoplasm. The enzyme catalyses shikimate + ATP = 3-phosphoshikimate + ADP + H(+). The protein operates within metabolic intermediate biosynthesis; chorismate biosynthesis; chorismate from D-erythrose 4-phosphate and phosphoenolpyruvate: step 5/7. Its function is as follows. Catalyzes the specific phosphorylation of the 3-hydroxyl group of shikimic acid using ATP as a cosubstrate. In Thioalkalivibrio sulfidiphilus (strain HL-EbGR7), this protein is Shikimate kinase.